A 403-amino-acid chain; its full sequence is MPLAKLCAKKLSSPLMKLCYPNLNGKLPFSNLSNILDNSSLKFHSCNPHITCRGLSTVALRPQTITKDDKRDFMAVFPDIVRDLTQLNPGISDLSTLISKIMQYNVSGGKKVRGLTVVYSYRMLAPDHALTPENIRLAQILGWCVEMLQGFFLVIDDLADQSITRRGRPCWYRNPDVGLRAGSDALLIQSGTFQLLQQHCKDREFYIDLVELFLDAVRRTTYGQTLDHVSSFPNITHLTMDRYNFITKYKTSYYTFHLPVATAMYMAGIYNTELHRQAKSVLLEMGHYFQVQDDYLDVFGDEEVIGKIGTDIQEGKCTWLAIVAFQRASPSQREILESCYGSKDPEKIKKVKDTFIEIGVPAVFHAYEEETYNLITRQIQQLSQGLPHELFLTLLHKTYGRKQ.

Mg(2+)-binding residues include aspartate 156 and aspartate 160. A DDXXD motif motif is present at residues 156–160 (DDLAD).

This sequence belongs to the FPP/GGPP synthase family. Mg(2+) is required as a cofactor.

It carries out the reaction isopentenyl diphosphate + (2E)-geranyl diphosphate = (2Z,6E)-farnesyl diphosphate + diphosphate. The protein operates within pheromone biosynthesis. In terms of biological role, farnesyl pyrophosphate synthase involved in pheromone biosynthesis by catalyzing the formation of (2Z,6E)-farnesyl diphosphate. This chain is Farnesyl pyrophosphate synthase, found in Nezara viridula (Southern green stink bug).